A 64-amino-acid chain; its full sequence is Large ribosomal subunit protein uL29 (64 aa).

The protein belongs to the universal ribosomal protein uL29 family.

The sequence is that of Large ribosomal subunit protein uL29 from Chloroherpeton thalassium (strain ATCC 35110 / GB-78).